Consider the following 401-residue polypeptide: DNA replication and repair protein RecF (401 aa).

30–37 is an ATP binding site; sequence GYNGIGKT.

Belongs to the RecF family.

Its subcellular location is the cytoplasm. In terms of biological role, the RecF protein is involved in DNA metabolism; it is required for DNA replication and normal SOS inducibility. RecF binds preferentially to single-stranded, linear DNA. It also seems to bind ATP. This is DNA replication and repair protein RecF from Arthrobacter sp. (strain FB24).